Reading from the N-terminus, the 664-residue chain is Macoilin (664 aa).

The next 4 membrane-spanning stretches (helical) occupy residues 28-48 (TFLY…DFVL), 75-95 (AFSV…LLFI), 120-140 (VCLP…AIRF), and 154-174 (FAAH…KSYV). A compositionally biased stretch (basic and acidic residues) spans 253-265 (REKGKEKDKDAKK). Residues 253–274 (REKGKEKDKDAKKHNLGINNNN) are disordered. Phosphoserine is present on Ser-305. Polar residues predominate over residues 320 to 348 (KNYKNASGVVNSSPRSHSATNGSIPSSSS). The disordered stretch occupies residues 320–367 (KNYKNASGVVNSSPRSHSATNGSIPSSSSKNEKKQKCTSKSPSAHKDL). Asn-324 is a glycosylation site (N-linked (GlcNAc...) asparagine). Ser-332 bears the Phosphoserine mark. N-linked (GlcNAc...) asparagine glycosylation is found at Asn-340 and Asn-452. Phosphoserine occurs at positions 631 and 634. The tract at residues 631-664 (SPLSPVSPHYSSKFVETSPSGLDPNASVYQPLKK) is disordered. Asn-655 is a glycosylation site (N-linked (GlcNAc...) asparagine).

Belongs to the macoilin family.

The protein localises to the rough endoplasmic reticulum membrane. It localises to the nucleus membrane. Plays a role in the regulation of neuronal activity. This is Macoilin (MACO1) from Bos taurus (Bovine).